Reading from the N-terminus, the 94-residue chain is Small ribosomal subunit protein bS20c (94 aa).

Belongs to the bacterial ribosomal protein bS20 family.

The protein localises to the plastid. It localises to the chloroplast. Its function is as follows. Binds directly to 16S ribosomal RNA. The polypeptide is Small ribosomal subunit protein bS20c (Porphyra purpurea (Red seaweed)).